Reading from the N-terminus, the 196-residue chain is Probable malonic semialdehyde reductase RutE (196 aa).

It belongs to the nitroreductase family. HadB/RutE subfamily. FMN serves as cofactor.

It catalyses the reaction 3-hydroxypropanoate + NADP(+) = 3-oxopropanoate + NADPH + H(+). May reduce toxic product malonic semialdehyde to 3-hydroxypropionic acid, which is excreted. The sequence is that of Probable malonic semialdehyde reductase RutE from Escherichia coli (strain K12 / MC4100 / BW2952).